Reading from the N-terminus, the 170-residue chain is Cathelicidin antimicrobial peptide (170 aa).

The N-terminal stretch at 1–30 (MNTQWDSPSLGRWSLVLLLLGLVMPLAIVA) is a signal peptide. Residues 31–131 (QVLSYQEAVL…DISCDKDKRK (101 aa)) constitute a propeptide, cathelin-like domain (CLD). 2 disulfides stabilise this stretch: Cys86–Cys97 and Cys108–Cys125. The segment at 150 to 162 (LKNIGQRIKDFFG) is active core.

The protein belongs to the cathelicidin family. Monomer, homodimer or homotrimer (in vitro). Oligomerizes as tetra- or hexamer in solution (in vitro). In terms of processing, proteolytically cleaved by proteinase PRTN3 into antibacterial peptide LL-37. Proteolytically cleaved by cathepsin CTSG and neutrophil elastase ELANE. Post-translationally, resistant to proteolytic degradation in solution, and when bound to both zwitterionic (mimicking mammalian membranes) and negatively charged membranes (mimicking bacterial membranes). After secretion onto the skin surface, the CAMP gene product is processed by a serine protease-dependent mechanism into multiple novel antimicrobial peptides distinct from and shorter than cathelicidin LL-37. These peptides show enhanced antimicrobial action, acquiring the ability to kill skin pathogens such as S.aureus, E.coli and C.albicans. These peptides have lost the ability to stimulate CXCL8/IL8 release from keratinocytes. The peptides act synergistically, killing bacteria at lower concentrations when present together, and maintain activity at increased salt condition.

Its subcellular location is the secreted. The protein resides in the vesicle. Its function is as follows. Antimicrobial protein that is an integral component of the innate immune system. Binds to bacterial lipopolysaccharides (LPS). Acts via neutrophil N-formyl peptide receptors to enhance the release of CXCL2. Postsecretory processing generates multiple cathelicidin antimicrobial peptides with various lengths which act as a topical antimicrobial defense in sweat on skin. The unprocessed precursor form, cathelicidin antimicrobial peptide, inhibits the growth of Gram-negative E.coli and E.aerogenes with efficiencies comparable to that of the mature peptide LL-37 (in vitro). Antimicrobial peptide that is an integral component of the innate immune system. Binds to bacterial lipopolysaccharides (LPS). Causes membrane permeabilization by forming transmembrane pores (in vitro). Causes lysis of E.coli. Exhibits antimicrobial activity against Gram-negative bacteria such as P.aeruginosa, S.typhimurium, E.aerogenes, E.coli and P.syringae, Gram-positive bacteria such as L.monocytogenes, S.epidermidis, S.pyogenes and S.aureus, as well as vancomycin-resistant enterococci (in vitro). Exhibits antimicrobial activity against methicillin-resistant S.aureus, P.mirabilis, and C.albicans in low-salt media, but not in media containing 100 mM NaCl (in vitro). Forms chiral supramolecular assemblies with quinolone signal (PQS) molecules of P.aeruginosa, which may lead to interference of bacterial quorum signaling and perturbance of bacterial biofilm formation. May form supramolecular fiber-like assemblies on bacterial membranes. Induces cytokine and chemokine producation as well as TNF/TNFA and CSF2/GMCSF production in normal human keratinocytes. Exhibits hemolytic activity against red blood cells. Functionally, exhibits antimicrobial activity against E.coli and B.megaterium (in vitro). This Ateles fusciceps (Brown-headed spider monkey) protein is Cathelicidin antimicrobial peptide.